The following is a 550-amino-acid chain: uncharacterized protein (550 aa).

The signal sequence occupies residues 1 to 53; it reads MVVIANKGALWAYYCKRLLNSVTYMMYPLIRKRTMKKLLLIVGLLLACSTVMR. Residues Asn296 and Asn518 are each glycosylated (N-linked (GlcNAc...) asparagine).

The protein resides in the endoplasmic reticulum. This is an uncharacterized protein from Schizosaccharomyces pombe (strain 972 / ATCC 24843) (Fission yeast).